A 338-amino-acid polypeptide reads, in one-letter code: Holliday junction branch migration complex subunit RuvB (338 aa).

Residues 1 to 182 (MDDRMVDQSQ…FGVHLRLEYY (182 aa)) form a large ATPase domain (RuvB-L) region. ATP contacts are provided by residues Leu21, Arg22, Gly63, Lys66, Thr67, Thr68, 129–131 (EDF), Arg172, Tyr182, and Arg219. Mg(2+) is bound at residue Thr67. The small ATPAse domain (RuvB-S) stretch occupies residues 183–253 (KESELKDIII…TTKRALQLLQ (71 aa)). The segment at 256 to 338 (DYGLDYIDHK…KNGKRDNFEY (83 aa)) is head domain (RuvB-H). The DNA site is built by Arg292, Arg311, and Arg316.

This sequence belongs to the RuvB family. In terms of assembly, homohexamer. Forms an RuvA(8)-RuvB(12)-Holliday junction (HJ) complex. HJ DNA is sandwiched between 2 RuvA tetramers; dsDNA enters through RuvA and exits via RuvB. An RuvB hexamer assembles on each DNA strand where it exits the tetramer. Each RuvB hexamer is contacted by two RuvA subunits (via domain III) on 2 adjacent RuvB subunits; this complex drives branch migration. In the full resolvosome a probable DNA-RuvA(4)-RuvB(12)-RuvC(2) complex forms which resolves the HJ.

It localises to the cytoplasm. The enzyme catalyses ATP + H2O = ADP + phosphate + H(+). In terms of biological role, the RuvA-RuvB-RuvC complex processes Holliday junction (HJ) DNA during genetic recombination and DNA repair, while the RuvA-RuvB complex plays an important role in the rescue of blocked DNA replication forks via replication fork reversal (RFR). RuvA specifically binds to HJ cruciform DNA, conferring on it an open structure. The RuvB hexamer acts as an ATP-dependent pump, pulling dsDNA into and through the RuvAB complex. RuvB forms 2 homohexamers on either side of HJ DNA bound by 1 or 2 RuvA tetramers; 4 subunits per hexamer contact DNA at a time. Coordinated motions by a converter formed by DNA-disengaged RuvB subunits stimulates ATP hydrolysis and nucleotide exchange. Immobilization of the converter enables RuvB to convert the ATP-contained energy into a lever motion, pulling 2 nucleotides of DNA out of the RuvA tetramer per ATP hydrolyzed, thus driving DNA branch migration. The RuvB motors rotate together with the DNA substrate, which together with the progressing nucleotide cycle form the mechanistic basis for DNA recombination by continuous HJ branch migration. Branch migration allows RuvC to scan DNA until it finds its consensus sequence, where it cleaves and resolves cruciform DNA. In Staphylococcus carnosus (strain TM300), this protein is Holliday junction branch migration complex subunit RuvB.